A 183-amino-acid chain; its full sequence is Gene BABR protein 2 (183 aa).

This Babesia bovis protein is Gene BABR protein 2.